The primary structure comprises 365 residues: Cobalt-precorrin-5B C(1)-methyltransferase (365 aa).

This sequence belongs to the CbiD family.

It carries out the reaction Co-precorrin-5B + S-adenosyl-L-methionine = Co-precorrin-6A + S-adenosyl-L-homocysteine. Its pathway is cofactor biosynthesis; adenosylcobalamin biosynthesis; cob(II)yrinate a,c-diamide from sirohydrochlorin (anaerobic route): step 6/10. Catalyzes the methylation of C-1 in cobalt-precorrin-5B to form cobalt-precorrin-6A. This Clostridium perfringens (strain SM101 / Type A) protein is Cobalt-precorrin-5B C(1)-methyltransferase.